We begin with the raw amino-acid sequence, 428 residues long: Immunoglobulin superfamily containing leucine-rich repeat protein (428 aa).

The N-terminal stretch at 1 to 18 is a signal peptide; that stretch reads MQELHLLWWALLLGLAQA. The LRRNT domain maps to 19-50; sequence CPEPCDCGEKYGFQIADCAYRDLESVPPGFPA. The N-linked (GlcNAc...) asparagine glycan is linked to Asn-51. 5 LRR repeats span residues 51-72, 75-96, 99-122, 123-144, and 147-168; these read NVTTLSLSANRLPGLPEGAFRE, LLQSLWLAHNEIRTVAAGALAS, HLKSLDLSHNLISDFAWSDLHNLS, ALQLLKMDSNELTFIPRDAFRS, and ALRSLQLNHNRLHTLAEGTFTP. Residues 180-231 enclose the LRRCT domain; that stretch reads NPFDCTCGIVWLKTWALTTAVSIPEQDNIACTSPHVLKGTPLSRLPPLPCSA. In terms of domain architecture, Ig-like spans 232–343; it reads PSVQLSYQPS…GSAESSVDVA (112 aa). A disulfide bond links Cys-257 and Cys-327. N-linked (GlcNAc...) asparagine glycosylation occurs at Asn-309.

In terms of tissue distribution, expressed in various tissues including retina, heart, skeletal muscle, prostate, ovary, small intestine, thyroid, adrenal cortex, testis, stomach and spinal cord.

The protein localises to the secreted. This Homo sapiens (Human) protein is Immunoglobulin superfamily containing leucine-rich repeat protein (ISLR).